Consider the following 421-residue polypeptide: PDZ and LIM domain protein 7 (421 aa).

The PDZ domain maps to 1–85 (MEEYKVTLDG…KLGLVLSRFA (85 aa)). A disordered region spans residues 115-193 (IARPFGSGTP…STGPAVRPPW (79 aa)). Polar residues predominate over residues 147 to 172 (YPSSQMPQGQLQNGQKSRTVSNVSGK). LIM zinc-binding domains are found at residues 244–302 (PVCS…ARFA), 303–362 (PNCA…MFGT), and 363–421 (KCRG…FSNV).

The protein localises to the cytoplasm. The protein resides in the cytoskeleton. May function as a scaffold on which the coordinated assembly of proteins can occur. May play a role as an adapter that, via its PDZ domain, localizes LIM-binding proteins to actin filaments of both skeletal muscle and nonmuscle tissues. The polypeptide is PDZ and LIM domain protein 7 (pdlim7) (Xenopus laevis (African clawed frog)).